The chain runs to 287 residues: 3-hydroxyanthranilate 3,4-dioxygenase (287 aa).

The interval methionine 1–aspartate 163 is domain A (catalytic). Residue arginine 46 coordinates O2. Residues histidine 50, glutamate 56, and histidine 94 each coordinate Fe cation. Glutamate 56 serves as a coordination point for substrate. Substrate contacts are provided by arginine 98 and glutamate 108. The tract at residues proline 164 to valine 180 is linker. Residues methionine 181–tyrosine 287 are domain B.

This sequence belongs to the 3-HAO family. In terms of assembly, monomer. Fe(2+) serves as cofactor.

The protein resides in the cytoplasm. It localises to the cytosol. It catalyses the reaction 3-hydroxyanthranilate + O2 = (2Z,4Z)-2-amino-3-carboxymuconate 6-semialdehyde. Its pathway is cofactor biosynthesis; NAD(+) biosynthesis; quinolinate from L-kynurenine: step 3/3. In terms of biological role, catalyzes the oxidative ring opening of 3-hydroxyanthranilate to 2-amino-3-carboxymuconate semialdehyde, which spontaneously cyclizes to quinolinate. This Danio rerio (Zebrafish) protein is 3-hydroxyanthranilate 3,4-dioxygenase (haao).